A 337-amino-acid polypeptide reads, in one-letter code: 4-hydroxy-2-oxovalerate aldolase (337 aa).

The region spanning Ile6 to Met256 is the Pyruvate carboxyltransferase domain. Arg14–Asp15 is a binding site for substrate. Asp15 contributes to the Mn(2+) binding site. His18 serves as the catalytic Proton acceptor. Residues Ser168 and His195 each contribute to the substrate site. Residues His195 and His197 each coordinate Mn(2+). Tyr286 contributes to the substrate binding site.

This sequence belongs to the 4-hydroxy-2-oxovalerate aldolase family.

It catalyses the reaction (S)-4-hydroxy-2-oxopentanoate = acetaldehyde + pyruvate. The polypeptide is 4-hydroxy-2-oxovalerate aldolase (nahM) (Geobacillus genomosp. 3).